The sequence spans 1164 residues: Nuclear exosome regulator NRDE2 (1164 aa).

Disordered stretches follow at residues 1–25 (MALF…ELDW) and 39–149 (LSQQ…GHRF). A2 carries the post-translational modification N-acetylalanine. Residues 61–73 (LKSESSDESDTNK) are compositionally biased toward basic and acidic residues. A coiled-coil region spans residues 61 to 383 (LKSESSDESD…IESNQSSVDL (323 aa)). Basic residues predominate over residues 74 to 103 (KLKQTSRKKKKEKKKKRKHQHHKKTKRKHG). Residues 110 to 133 (SETDTDSEKDKPSRGVGGSKKESE) show a composition bias toward basic and acidic residues. Positions 163–266 (FRTDKKPDPA…KDLEDAAPVT (104 aa)) are MID/MTR4-interacting domain. The segment at 279-305 (TTHWLQGQGPPEQESKQPDAQPDSESA) is disordered. HAT repeat units follow at residues 305 to 337 (AALK…FQDE), 395 to 427 (WEPS…FCQS), 758 to 792 (SQGK…LEWL), 978 to 1010 (YPLA…IQNK), and 1067 to 1101 (GLMH…FLVS).

Belongs to the NRDE2 family. Interacts with MTREX; the interaction is direct and stabilizes NRDE2. Interacts with EXOSC10, EFTUD2 and EIF4A3.

It is found in the nucleus speckle. Its subcellular location is the nucleus. The protein resides in the nucleolus. It localises to the nucleoplasm. Functionally, protein of the nuclear speckles that regulates RNA degradation and export from the nucleus through its interaction with MTREX an essential factor directing various RNAs to exosomal degradation. Changes the conformation of MTREX, precluding its association with the nuclear exosome and interaction with proteins required for its function in RNA exosomal degradation. Negatively regulates, for instance, the degradation of mRNAs and lncRNAs by inhibiting their MTREX-mediated recruitment to nuclear exosome. By preventing the degradation of RNAs in the nucleus, it promotes their export to the cytoplasm. U5 snRNP-associated RNA splicing factor which is required for efficient splicing of CEP131 pre-mRNA and plays an important role in centrosome maturation, integrity and function during mitosis. Suppresses intron retention in a subset of pre-mRNAs containing short, GC-rich introns with relatively weak 5' and 3' splice sites. Plays a role in DNA damage response. The protein is Nuclear exosome regulator NRDE2 of Homo sapiens (Human).